The following is a 200-amino-acid chain: Rho GDP-dissociation inhibitor 2 (200 aa).

The segment at 1–39 is disordered; that stretch reads MTEKDAQPQLEEADDDLDSKLNYKPPPQKSLKELQEMDK. At T2 the chain carries N-acetylthreonine. N6-acetyllysine is present on K20. Y23 is subject to Phosphotyrosine. Residues K24, K39, K46, K101, and K123 each carry the N6-acetyllysine modification. Positions 30–39 are enriched in basic and acidic residues; that stretch reads SLKELQEMDK. The residue at position 144 (S144) is a Phosphoserine. K174 carries the post-translational modification N6-acetyllysine.

It belongs to the Rho GDI family. Interacts with RHOA. Interacts with RAC1. Interacts with RAC2. Interacts with CDC42. Preferentially expressed in hematopoietic cells.

The protein localises to the cytoplasm. The protein resides in the cytosol. Regulates the GDP/GTP exchange reaction of the Rho proteins by inhibiting the dissociation of GDP from them, and the subsequent binding of GTP to them. Regulates reorganization of the actin cytoskeleton mediated by Rho family members. This is Rho GDP-dissociation inhibitor 2 (Arhgdib) from Mus musculus (Mouse).